A 679-amino-acid polypeptide reads, in one-letter code: Glycine--tRNA ligase beta subunit (679 aa).

The protein belongs to the class-II aminoacyl-tRNA synthetase family. Tetramer of two alpha and two beta subunits.

Its subcellular location is the cytoplasm. The catalysed reaction is tRNA(Gly) + glycine + ATP = glycyl-tRNA(Gly) + AMP + diphosphate. The protein is Glycine--tRNA ligase beta subunit of Streptococcus mutans serotype c (strain ATCC 700610 / UA159).